The sequence spans 827 residues: Penicillin-binding protein 1A (827 aa).

Residues 1–18 lie on the Cytoplasmic side of the membrane; it reads MGKKKKKRKSSAFKIILN. A helical; Signal-anchor for type II membrane protein membrane pass occupies residues 19–39; the sequence is VFLSIFLVAGVAFGGIVFAMI. Over 40 to 827 the chain is Extracellular; sequence KTAPPLNVQQ…QNHEDNKNKQ (788 aa). A transglycosylase region spans residues 57–229; the sequence is SILYDDKGQY…PSVYYPYSSA (173 aa). Glutamate 96 acts as the Proton donor; for transglycosylase activity in catalysis. The segment at 357–641 is transpeptidase; sequence ASAVIMDYHN…AARLWGDIMK (285 aa). Serine 398 functions as the Acyl-ester intermediate; for transpeptidase activity in the catalytic mechanism. Residues 755 to 827 are disordered; the sequence is GSLPPTEEKN…QNHEDNKNKQ (73 aa). Residues 760–790 show a composition bias toward basic and acidic residues; the sequence is TEEKNNSNTRDKNKDKNKDKDKNKNKDKNPS. Positions 791–817 are enriched in low complexity; that stretch reads QDKPNNNNNNNNNDNNNNTKPPENDSN. A compositionally biased stretch (basic and acidic residues) spans 818–827; sequence QNHEDNKNKQ.

In the N-terminal section; belongs to the glycosyltransferase 51 family. It in the C-terminal section; belongs to the transpeptidase family.

Its subcellular location is the cell membrane. It carries out the reaction [GlcNAc-(1-&gt;4)-Mur2Ac(oyl-L-Ala-gamma-D-Glu-L-Lys-D-Ala-D-Ala)](n)-di-trans,octa-cis-undecaprenyl diphosphate + beta-D-GlcNAc-(1-&gt;4)-Mur2Ac(oyl-L-Ala-gamma-D-Glu-L-Lys-D-Ala-D-Ala)-di-trans,octa-cis-undecaprenyl diphosphate = [GlcNAc-(1-&gt;4)-Mur2Ac(oyl-L-Ala-gamma-D-Glu-L-Lys-D-Ala-D-Ala)](n+1)-di-trans,octa-cis-undecaprenyl diphosphate + di-trans,octa-cis-undecaprenyl diphosphate + H(+). The catalysed reaction is Preferential cleavage: (Ac)2-L-Lys-D-Ala-|-D-Ala. Also transpeptidation of peptidyl-alanyl moieties that are N-acyl substituents of D-alanine.. It functions in the pathway cell wall biogenesis; peptidoglycan biosynthesis. Functionally, cell wall formation. Synthesis of cross-linked peptidoglycan from the lipid intermediates. The enzyme has a penicillin-insensitive transglycosylase N-terminal domain (formation of linear glycan strands) and a penicillin-sensitive transpeptidase C-terminal domain (cross-linking of the peptide subunits). The sequence is that of Penicillin-binding protein 1A (pbpA) from Clostridium botulinum (strain Langeland / NCTC 10281 / Type F).